The sequence spans 73 residues: MWFCIDLGANVFKEARALAGKKNRRVLQYILGLNIFKRELIPPCKDPDPSQIQILLKNYILKNVSTVFTYYCQ.

The protein belongs to the asfivirus DP63R family.

This is an uncharacterized protein from African swine fever virus (isolate Tick/Malawi/Lil 20-1/1983) (ASFV).